Here is a 491-residue protein sequence, read N- to C-terminus: Xaa-Pro aminopeptidase 1 (491 aa).

The disordered stretch occupies residues 1–32; that stretch reads MAEELTPENPAIPETPEETEEPIKQRKNGLYP. The Mn(2+) site is built by Asp308, Asp320, His403, Glu434, and Glu458.

The protein belongs to the peptidase M24B family. As to quaternary structure, homodimer. Mn(2+) is required as a cofactor.

It carries out the reaction Release of any N-terminal amino acid, including proline, that is linked to proline, even from a dipeptide or tripeptide.. The protein is Xaa-Pro aminopeptidase 1 (pepPI) of Streptomyces coelicolor (strain ATCC BAA-471 / A3(2) / M145).